Consider the following 159-residue polypeptide: Ubiquitin-like protein ATG12 (159 aa).

Residues 1–40 form a disordered region; that stretch reads MASPQPPFGGGSNSNSNTASPSNNLSPTASPLLEGRDSPN. Positions 13–27 are enriched in low complexity; the sequence is NSNSNTASPSNNLSP. A Glycyl lysine isopeptide (Gly-Lys) (interchain with K-218 in ATG5) cross-link involves residue G159.

Belongs to the ATG12 family. Forms a conjugate with ATG5. Forms a thioester bond with the 'Cys-116' of ATG10. Interacts with the ATG7 C-terminal 40 amino acids domain. The ATG12-ATG5 conjugate forms a complex with several units of ATG16. The ATG12-ATG5 conjugate also associates with ATG3.

It localises to the preautophagosomal structure membrane. The protein resides in the cytoplasm. In terms of biological role, ubiquitin-like protein involved in cytoplasm to vacuole transport (Cvt), autophagy vesicles formation, mitophagy, and nucleophagy. Conjugation with ATG5 through a ubiquitin-like conjugating system involving also ATG7 as an E1-like activating enzyme and ATG10 as an E2-like conjugating enzyme, is essential for its function. The ATG12-ATG5 conjugate acts as an E3-like enzyme which is required for lipidation of ATG8 and ATG8 association to the vesicle membranes. ATG12-ATG5 rearranges the ATG3 catalytic center and enhances its E2 activity. Plays a role in sexual development and perithecia formation. In Sordaria macrospora (strain ATCC MYA-333 / DSM 997 / K(L3346) / K-hell), this protein is Ubiquitin-like protein ATG12.